The chain runs to 403 residues: Tyrosine--tRNA ligase (403 aa).

The short motif at Pro42–His51 is the 'HIGH' region element. The 'KMSKS' region signature appears at Lys226–Ser230. An ATP-binding site is contributed by Lys229. In terms of domain architecture, S4 RNA-binding spans Leu339–Leu400.

It belongs to the class-I aminoacyl-tRNA synthetase family. TyrS type 2 subfamily. Homodimer.

Its subcellular location is the cytoplasm. It carries out the reaction tRNA(Tyr) + L-tyrosine + ATP = L-tyrosyl-tRNA(Tyr) + AMP + diphosphate + H(+). In terms of biological role, catalyzes the attachment of tyrosine to tRNA(Tyr) in a two-step reaction: tyrosine is first activated by ATP to form Tyr-AMP and then transferred to the acceptor end of tRNA(Tyr). This Xanthomonas euvesicatoria pv. vesicatoria (strain 85-10) (Xanthomonas campestris pv. vesicatoria) protein is Tyrosine--tRNA ligase.